Here is a 353-residue protein sequence, read N- to C-terminus: Photosystem II protein D1 (353 aa).

Residue threonine 2 is modified to N-acetylthreonine. The residue at position 2 (threonine 2) is a Phosphothreonine. The next 3 membrane-spanning stretches (helical) occupy residues 29-46 (YIGW…TATS), 118-133 (HFLL…EWEL), and 142-156 (WIAV…AATA). Position 118 (histidine 118) interacts with chlorophyll a. Tyrosine 126 provides a ligand contact to pheophytin a. Aspartate 170 and glutamate 189 together coordinate [CaMn4O5] cluster. A helical transmembrane segment spans residues 197-218 (FHMLGVAGVFGGSLFSAMHGSL). Histidine 198 is a chlorophyll a binding site. Residues histidine 215 and 264 to 265 (SF) contribute to the a quinone site. Histidine 215 provides a ligand contact to Fe cation. Fe cation is bound at residue histidine 272. Residues 274 to 288 (FLAAWPVVGIWFTAL) form a helical membrane-spanning segment. 4 residues coordinate [CaMn4O5] cluster: histidine 332, glutamate 333, aspartate 342, and alanine 344. The propeptide occupies 345 to 353 (AVEAPSTNG).

The protein belongs to the reaction center PufL/M/PsbA/D family. In terms of assembly, PSII is composed of 1 copy each of membrane proteins PsbA, PsbB, PsbC, PsbD, PsbE, PsbF, PsbH, PsbI, PsbJ, PsbK, PsbL, PsbM, PsbT, PsbX, PsbY, PsbZ, Psb30/Ycf12, at least 3 peripheral proteins of the oxygen-evolving complex and a large number of cofactors. It forms dimeric complexes. The D1/D2 heterodimer binds P680, chlorophylls that are the primary electron donor of PSII, and subsequent electron acceptors. It shares a non-heme iron and each subunit binds pheophytin, quinone, additional chlorophylls, carotenoids and lipids. D1 provides most of the ligands for the Mn4-Ca-O5 cluster of the oxygen-evolving complex (OEC). There is also a Cl(-1) ion associated with D1 and D2, which is required for oxygen evolution. The PSII complex binds additional chlorophylls, carotenoids and specific lipids. is required as a cofactor. Tyr-161 forms a radical intermediate that is referred to as redox-active TyrZ, YZ or Y-Z. Post-translationally, C-terminally processed by CTPA; processing is essential to allow assembly of the oxygen-evolving complex and thus photosynthetic growth.

The protein localises to the plastid. The protein resides in the chloroplast thylakoid membrane. It catalyses the reaction 2 a plastoquinone + 4 hnu + 2 H2O = 2 a plastoquinol + O2. Functionally, photosystem II (PSII) is a light-driven water:plastoquinone oxidoreductase that uses light energy to abstract electrons from H(2)O, generating O(2) and a proton gradient subsequently used for ATP formation. It consists of a core antenna complex that captures photons, and an electron transfer chain that converts photonic excitation into a charge separation. The D1/D2 (PsbA/PsbD) reaction center heterodimer binds P680, the primary electron donor of PSII as well as several subsequent electron acceptors. The sequence is that of Photosystem II protein D1 from Drimys granadensis.